A 223-amino-acid polypeptide reads, in one-letter code: uncharacterized protein (223 aa).

A compositionally biased stretch (basic residues) spans 1–11 (MLWVQRKRRRK). Positions 1–37 (MLWVQRKRRRKETSECPSDKDKSPESHKAKNESWIKS) are disordered. Residues 12 to 37 (ETSECPSDKDKSPESHKAKNESWIKS) show a composition bias toward basic and acidic residues. Ser43 bears the Phosphoserine mark. Disordered stretches follow at residues 49 to 73 (LDNN…SSTV) and 196 to 223 (THTF…NRRH). Positions 51–61 (NNASASGNATQ) are enriched in polar residues. Over residues 62–73 (TESGSEEVSSTV) the composition is skewed to low complexity. Positions 202–223 (HSHHSHHGHPSHQSHSLPNRRH) are enriched in basic residues.

This is an uncharacterized protein from Homo sapiens (Human).